A 288-amino-acid polypeptide reads, in one-letter code: ATP synthase gamma chain (288 aa).

This sequence belongs to the ATPase gamma chain family. As to quaternary structure, F-type ATPases have 2 components, CF(1) - the catalytic core - and CF(0) - the membrane proton channel. CF(1) has five subunits: alpha(3), beta(3), gamma(1), delta(1), epsilon(1). CF(0) has three main subunits: a, b and c.

The protein localises to the cell inner membrane. Produces ATP from ADP in the presence of a proton gradient across the membrane. The gamma chain is believed to be important in regulating ATPase activity and the flow of protons through the CF(0) complex. The chain is ATP synthase gamma chain from Vibrio cholerae serotype O1 (strain ATCC 39541 / Classical Ogawa 395 / O395).